The sequence spans 725 residues: Calcium-responsive transcription factor (725 aa).

The disordered stretch occupies residues 572–592 (TSPDESPAVVSVNNQPSSSPS). Low complexity predominate over residues 577-592 (SPAVVSVNNQPSSSPS).

It localises to the nucleus. Its function is as follows. Acts as a transcriptional activator that mediates the calcium- and neuron-selective induction of BDNF exon III transcription. Binds to the consensus calcium-response element CaRE1 5'-CTATTTCGAG-3' sequence. The chain is Calcium-responsive transcription factor (CARF) from Homo sapiens (Human).